Here is a 417-residue protein sequence, read N- to C-terminus: Gamma-glutamyl phosphate reductase (417 aa).

Belongs to the gamma-glutamyl phosphate reductase family.

The protein localises to the cytoplasm. The enzyme catalyses L-glutamate 5-semialdehyde + phosphate + NADP(+) = L-glutamyl 5-phosphate + NADPH + H(+). It functions in the pathway amino-acid biosynthesis; L-proline biosynthesis; L-glutamate 5-semialdehyde from L-glutamate: step 2/2. Functionally, catalyzes the NADPH-dependent reduction of L-glutamate 5-phosphate into L-glutamate 5-semialdehyde and phosphate. The product spontaneously undergoes cyclization to form 1-pyrroline-5-carboxylate. In Escherichia coli O6:K15:H31 (strain 536 / UPEC), this protein is Gamma-glutamyl phosphate reductase.